Consider the following 141-residue polypeptide: Large ribosomal subunit protein uL22 (141 aa).

This sequence belongs to the universal ribosomal protein uL22 family. As to quaternary structure, part of the 50S ribosomal subunit.

This protein binds specifically to 23S rRNA; its binding is stimulated by other ribosomal proteins, e.g. L4, L17, and L20. It is important during the early stages of 50S assembly. It makes multiple contacts with different domains of the 23S rRNA in the assembled 50S subunit and ribosome. Functionally, the globular domain of the protein is located near the polypeptide exit tunnel on the outside of the subunit, while an extended beta-hairpin is found that lines the wall of the exit tunnel in the center of the 70S ribosome. This is Large ribosomal subunit protein uL22 from Frankia casuarinae (strain DSM 45818 / CECT 9043 / HFP020203 / CcI3).